The following is a 111-amino-acid chain: Photosystem II reaction center Psb28 protein (111 aa).

It belongs to the Psb28 family. Part of the photosystem II complex.

The protein localises to the cellular thylakoid membrane. In Crocosphaera subtropica (strain ATCC 51142 / BH68) (Cyanothece sp. (strain ATCC 51142)), this protein is Photosystem II reaction center Psb28 protein.